A 423-amino-acid polypeptide reads, in one-letter code: Glucose-1-phosphate adenylyltransferase (423 aa).

Residues Y107, G172, 187–188 (EK), and S205 each bind alpha-D-glucose 1-phosphate.

The protein belongs to the bacterial/plant glucose-1-phosphate adenylyltransferase family. As to quaternary structure, homotetramer.

The catalysed reaction is alpha-D-glucose 1-phosphate + ATP + H(+) = ADP-alpha-D-glucose + diphosphate. It functions in the pathway glycan biosynthesis; glycogen biosynthesis. Functionally, involved in the biosynthesis of ADP-glucose, a building block required for the elongation reactions to produce glycogen. Catalyzes the reaction between ATP and alpha-D-glucose 1-phosphate (G1P) to produce pyrophosphate and ADP-Glc. This is Glucose-1-phosphate adenylyltransferase from Cereibacter sphaeroides (strain ATCC 17029 / ATH 2.4.9) (Rhodobacter sphaeroides).